A 466-amino-acid polypeptide reads, in one-letter code: 3-isopropylmalate dehydratase large subunit (466 aa).

[4Fe-4S] cluster is bound by residues cysteine 347, cysteine 407, and cysteine 410.

It belongs to the aconitase/IPM isomerase family. LeuC type 1 subfamily. In terms of assembly, heterodimer of LeuC and LeuD. Requires [4Fe-4S] cluster as cofactor.

It carries out the reaction (2R,3S)-3-isopropylmalate = (2S)-2-isopropylmalate. Its pathway is amino-acid biosynthesis; L-leucine biosynthesis; L-leucine from 3-methyl-2-oxobutanoate: step 2/4. Catalyzes the isomerization between 2-isopropylmalate and 3-isopropylmalate, via the formation of 2-isopropylmaleate. The chain is 3-isopropylmalate dehydratase large subunit from Escherichia coli O127:H6 (strain E2348/69 / EPEC).